We begin with the raw amino-acid sequence, 128 residues long: Fluoride-specific ion channel FluC (128 aa).

A run of 4 helical transmembrane segments spans residues 5-25 (LFIS…GLLF), 34-54 (FGTL…LGLF), 67-87 (FLIT…SEVV), and 99-119 (FCVL…GIWI). Residues Gly74 and Thr77 each contribute to the Na(+) site.

It belongs to the fluoride channel Fluc/FEX (TC 1.A.43) family.

It is found in the cell inner membrane. It carries out the reaction fluoride(in) = fluoride(out). Its activity is regulated as follows. Na(+) is not transported, but it plays an essential structural role and its presence is essential for fluoride channel function. In terms of biological role, fluoride-specific ion channel. Important for reducing fluoride concentration in the cell, thus reducing its toxicity. The polypeptide is Fluoride-specific ion channel FluC (Haemophilus influenzae (strain PittGG)).